The primary structure comprises 527 residues: Peptide chain release factor 3 (527 aa).

The 269-residue stretch at 9–277 (AKRRTFAIIS…AVVDWAPRPL (269 aa)) folds into the tr-type G domain. Residues 18-25 (SHPDAGKT), 86-90 (DTPGH), and 140-143 (NKLD) each bind GTP.

This sequence belongs to the TRAFAC class translation factor GTPase superfamily. Classic translation factor GTPase family. PrfC subfamily.

It localises to the cytoplasm. Increases the formation of ribosomal termination complexes and stimulates activities of RF-1 and RF-2. It binds guanine nucleotides and has strong preference for UGA stop codons. It may interact directly with the ribosome. The stimulation of RF-1 and RF-2 is significantly reduced by GTP and GDP, but not by GMP. The chain is Peptide chain release factor 3 from Pseudomonas entomophila (strain L48).